A 61-amino-acid chain; its full sequence is Large ribosomal subunit protein eL37 (61 aa).

The Zn(2+) site is built by Cys-19, Cys-22, Cys-34, and Cys-37. The segment at 19-37 adopts a C4-type zinc-finger fold; that stretch reads CRRCGRNSFNVRKGYCAAC.

This sequence belongs to the eukaryotic ribosomal protein eL37 family. Requires Zn(2+) as cofactor.

Its function is as follows. Binds to the 23S rRNA. The protein is Large ribosomal subunit protein eL37 (rpl37e) of Sulfurisphaera tokodaii (strain DSM 16993 / JCM 10545 / NBRC 100140 / 7) (Sulfolobus tokodaii).